The chain runs to 544 residues: Chaperonin GroEL (544 aa).

ATP is bound by residues 30–33 (TLGP), Lys51, 87–91 (DGTTT), Gly415, 479–481 (NAA), and Asp495.

This sequence belongs to the chaperonin (HSP60) family. As to quaternary structure, forms a cylinder of 14 subunits composed of two heptameric rings stacked back-to-back. Interacts with the co-chaperonin GroES.

It localises to the cytoplasm. It catalyses the reaction ATP + H2O + a folded polypeptide = ADP + phosphate + an unfolded polypeptide.. Together with its co-chaperonin GroES, plays an essential role in assisting protein folding. The GroEL-GroES system forms a nano-cage that allows encapsulation of the non-native substrate proteins and provides a physical environment optimized to promote and accelerate protein folding. This Francisella tularensis subsp. mediasiatica (strain FSC147) protein is Chaperonin GroEL.